We begin with the raw amino-acid sequence, 268 residues long: Undecaprenyl-diphosphatase (268 aa).

The next 7 membrane-spanning stretches (helical) occupy residues 7-27 (IFNA…PISS), 87-107 (LIYH…LCIY), 116-136 (FYSI…TEIS), 146-166 (IETP…WPGF), 187-207 (VEFS…LDVI), 210-230 (FYDI…SAFI), and 247-267 (SLIP…LFFM).

The protein belongs to the UppP family.

Its subcellular location is the cell membrane. It carries out the reaction di-trans,octa-cis-undecaprenyl diphosphate + H2O = di-trans,octa-cis-undecaprenyl phosphate + phosphate + H(+). Functionally, catalyzes the dephosphorylation of undecaprenyl diphosphate (UPP). Confers resistance to bacitracin. The chain is Undecaprenyl-diphosphatase from Buchnera aphidicola subsp. Baizongia pistaciae (strain Bp).